A 208-amino-acid chain; its full sequence is CASP-like protein 1D1 (208 aa).

A disordered region spans residues 1–36 (MSSVDTEKPAPPPLETEAPPPPPPPPPPPPPPPPPP). Topologically, residues 1–41 (MSSVDTEKPAPPPLETEAPPPPPPPPPPPPPPPPPPAGYSA) are cytoplasmic. Over residues 9–36 (PAPPPLETEAPPPPPPPPPPPPPPPPPP) the composition is skewed to pro residues. The helical transmembrane segment at 42-62 (LDVVLRILLLGSAVASVVVMV) threads the bilayer. Residues 63-89 (TSVQTKLIAVAGVPVLVSNKAKFQNSP) lie on the Extracellular side of the membrane. A helical transmembrane segment spans residues 90 to 110 (AFIYFVAALSVVGLYSIITTL). Topologically, residues 111-133 (ASFIFISKPSCSTKTILHLAIWD) are cytoplasmic. Residues 134–154 (VLMLGLAASATGTAGGVAYVG) traverse the membrane as a helical segment. Topologically, residues 155–180 (LKGNSHVGWNKVCNTYDKFCRHVGGS) are extracellular. Residues 181-201 (IAVALFASILLVLLVWLSLFT) form a helical membrane-spanning segment. The Cytoplasmic portion of the chain corresponds to 202–208 (LYSRIRK).

It belongs to the Casparian strip membrane proteins (CASP) family. Homodimer and heterodimers.

The protein localises to the cell membrane. This Vitis vinifera (Grape) protein is CASP-like protein 1D1.